We begin with the raw amino-acid sequence, 196 residues long: Small ribosomal subunit protein uS4c (196 aa).

In terms of domain architecture, S4 RNA-binding spans 82 to 143 (MRLDNILFRL…KQKSKALIQN (62 aa)).

It belongs to the universal ribosomal protein uS4 family. In terms of assembly, part of the 30S ribosomal subunit. Contacts protein S5. The interaction surface between S4 and S5 is involved in control of translational fidelity.

The protein localises to the plastid. The protein resides in the chloroplast. In terms of biological role, one of the primary rRNA binding proteins, it binds directly to 16S rRNA where it nucleates assembly of the body of the 30S subunit. Functionally, with S5 and S12 plays an important role in translational accuracy. The protein is Small ribosomal subunit protein uS4c (rps4) of Patersonia sp. (strain Lejeune 1997).